A 307-amino-acid polypeptide reads, in one-letter code: uncharacterized protein (307 aa).

Residues 54–307 enclose the EAL domain; the sequence is RHYLSTSMRV…KALPVDFFRE (254 aa). 2 helical membrane passes run 158 to 178 and 203 to 223; these read PGFL…AHAL and ALGV…LAYL.

It is found in the cell membrane. This is an uncharacterized protein from Mycobacterium tuberculosis (strain CDC 1551 / Oshkosh).